A 246-amino-acid chain; its full sequence is UDP-N-acetyl-D-mannosaminuronic acid transferase (246 aa).

The protein belongs to the glycosyltransferase 26 family.

It catalyses the reaction UDP-N-acetyl-alpha-D-mannosaminouronate + N-acetyl-alpha-D-glucosaminyl-di-trans,octa-cis-undecaprenyl diphosphate = beta-D-ManNAcA-(1-&gt;4)-alpha-D-GlcNAc-di-trans,octa-cis-undecaprenyl diphosphate + UDP + H(+). The protein operates within bacterial outer membrane biogenesis; enterobacterial common antigen biosynthesis. Catalyzes the synthesis of Und-PP-GlcNAc-ManNAcA (Lipid II), the second lipid-linked intermediate involved in enterobacterial common antigen (ECA) synthesis. The chain is UDP-N-acetyl-D-mannosaminuronic acid transferase from Yersinia pestis bv. Antiqua (strain Antiqua).